The sequence spans 269 residues: Putative 6-phosphogluconolactonase (269 aa).

Residues Asp-248–Gly-269 form a disordered region.

Belongs to the glucosamine/galactosamine-6-phosphate isomerase family. 6-phosphogluconolactonase subfamily.

The protein localises to the nucleus. The catalysed reaction is 6-phospho-D-glucono-1,5-lactone + H2O = 6-phospho-D-gluconate + H(+). It functions in the pathway carbohydrate degradation; pentose phosphate pathway; D-ribulose 5-phosphate from D-glucose 6-phosphate (oxidative stage): step 2/3. Its function is as follows. Hydrolysis of 6-phosphogluconolactone to 6-phosphogluconate. This chain is Putative 6-phosphogluconolactonase, found in Caenorhabditis elegans.